A 307-amino-acid chain; its full sequence is UPF0276 protein PM0211 (307 aa).

Belongs to the UPF0276 family.

The protein is UPF0276 protein PM0211 of Pasteurella multocida (strain Pm70).